The sequence spans 426 residues: Histidine--tRNA ligase (426 aa).

The protein belongs to the class-II aminoacyl-tRNA synthetase family. In terms of assembly, homodimer.

It is found in the cytoplasm. It carries out the reaction tRNA(His) + L-histidine + ATP = L-histidyl-tRNA(His) + AMP + diphosphate + H(+). This chain is Histidine--tRNA ligase, found in Geobacillus thermodenitrificans (strain NG80-2).